The primary structure comprises 196 residues: Orotate phosphoribosyltransferase (196 aa).

117-125 contacts 5-phospho-alpha-D-ribose 1-diphosphate; that stretch reads EDVVTTGLS. Thr121 and Arg149 together coordinate orotate.

It belongs to the purine/pyrimidine phosphoribosyltransferase family. PyrE subfamily. Homodimer. Mg(2+) is required as a cofactor.

It carries out the reaction orotidine 5'-phosphate + diphosphate = orotate + 5-phospho-alpha-D-ribose 1-diphosphate. It participates in pyrimidine metabolism; UMP biosynthesis via de novo pathway; UMP from orotate: step 1/2. Its function is as follows. Catalyzes the transfer of a ribosyl phosphate group from 5-phosphoribose 1-diphosphate to orotate, leading to the formation of orotidine monophosphate (OMP). This chain is Orotate phosphoribosyltransferase, found in Sphingopyxis alaskensis (strain DSM 13593 / LMG 18877 / RB2256) (Sphingomonas alaskensis).